The primary structure comprises 530 residues: Glucocorticoid modulatory element-binding protein 2 (530 aa).

One can recognise an SAND domain in the interval 81–163 (EEGENLEAEI…RKIMDSGELD (83 aa)). Zn(2+) is bound at residue Cys110. Lys136, Lys140, Lys143, and Arg154 together coordinate DNA. Residue Lys155 forms a Glycyl lysine isopeptide (Lys-Gly) (interchain with G-Cter in SUMO1); alternate linkage. A Glycyl lysine isopeptide (Lys-Gly) (interchain with G-Cter in SUMO2); alternate cross-link involves residue Lys155. Zn(2+) is bound by residues His167, Cys171, and Cys175. Coiled-coil stretches lie at residues 245 to 270 (LLDEVIQEFQQELEETMKGLQQRVQD) and 304 to 344 (QMDR…SNVL). Ser373 is subject to Phosphoserine.

Homodimer, and heterodimer of GMEB1 and GMEB2. Interacts with the glucocorticoid receptor (NR3C1). May interact with CREB-binding protein (CBP).

It localises to the nucleus. It is found in the cytoplasm. Its function is as follows. Trans-acting factor that binds to glucocorticoid modulatory elements (GME) present in the TAT (tyrosine aminotransferase) promoter and increases sensitivity to low concentrations of glucocorticoids. Also binds to the transferrin receptor promoter. In Mus musculus (Mouse), this protein is Glucocorticoid modulatory element-binding protein 2 (Gmeb2).